A 291-amino-acid polypeptide reads, in one-letter code: Beta-lactamase CTX-M-6 (291 aa).

The first 28 residues, 1 to 28 (MMTQSIRRSMLTVMATLPLLFSSATLHA), serve as a signal peptide directing secretion. The active-site Acyl-ester intermediate is the Ser73. A substrate-binding site is contributed by 237-239 (KTG).

Belongs to the class-A beta-lactamase family.

It catalyses the reaction a beta-lactam + H2O = a substituted beta-amino acid. Its function is as follows. Has cefotaxime-hydrolyzing activity. The polypeptide is Beta-lactamase CTX-M-6 (bla) (Salmonella typhimurium).